The chain runs to 351 residues: Nicotinate-nucleotide--dimethylbenzimidazole phosphoribosyltransferase (351 aa).

Catalysis depends on E317, which acts as the Proton acceptor.

This sequence belongs to the CobT family.

It catalyses the reaction 5,6-dimethylbenzimidazole + nicotinate beta-D-ribonucleotide = alpha-ribazole 5'-phosphate + nicotinate + H(+). It functions in the pathway nucleoside biosynthesis; alpha-ribazole biosynthesis; alpha-ribazole from 5,6-dimethylbenzimidazole: step 1/2. In terms of biological role, catalyzes the synthesis of alpha-ribazole-5'-phosphate from nicotinate mononucleotide (NAMN) and 5,6-dimethylbenzimidazole (DMB). The polypeptide is Nicotinate-nucleotide--dimethylbenzimidazole phosphoribosyltransferase (Bradyrhizobium sp. (strain ORS 278)).